The following is a 153-amino-acid chain: MSIIPSFFTSKRSNIFDPFSLDTWDPFQGIISTEPARETAAIVNARIDWKETPEAHVLKADLPGMKKEEVKVEVEDGRVLQISGERCREQEEKDDTWHRVERSSGKFIRRFRLPENAKMDEVKAMMENGVLTVVVPKEEEEKKPMVKAIDISG.

In terms of domain architecture, sHSP spans 38 to 153 (ETAAIVNARI…PMVKAIDISG (116 aa)).

The protein belongs to the small heat shock protein (HSP20) family. In terms of assembly, forms oligomeric structures.

It is found in the cytoplasm. In Helianthus annuus (Common sunflower), this protein is 17.6 kDa class I heat shock protein (HSP17.6).